We begin with the raw amino-acid sequence, 695 residues long: Electrogenic aspartate/glutamate antiporter Aralar, mitochondrial (695 aa).

The segment at 1 to 310 (MPMHIPFPFN…DYSDLSNIAP (310 aa)) is N-terminal domain. Residues 2-345 (PMHIPFPFNW…FIQVLESSYR (344 aa)) are Mitochondrial intermembrane-facing. EF-hand domains are found at residues 71 to 104 (FNDESVRLLANIADTSKDGLISFSEFQAFEGLLC), 105 to 140 (TPDALYRTAFQLFDRKGNGTVSYADFADVVQKTELH), 142 to 175 (KIPFSLDGPFIKRYFGDKKQRLINYAEFTQLLHD), and 176 to 211 (FHEEHAMEAFRSKDPAGTGFISPLDFQDIIVNVKRH). Positions 84, 86, 88, 90, 95, 118, 122, 124, and 129 each coordinate Ca(2+). Residues Asp-189, Thr-193, and Asp-200 each contribute to the Ca(2+) site. The tract at residues 311 to 327 (EHYTKHMTHRLAEIKAV) is linker loop domain. A carrier domain region spans residues 336-627 (FIQVLESSYR…RLFYVDFGGT (292 aa)). Solcar repeat units follow at residues 340–431 (LESS…VRDK), 439–523 (IPTW…TKAM), and 531–619 (NHPL…LQRL). The chain crosses the membrane as a helical span at residues 346–363 (FTLGSFAGAVGATVVYPI). Residues 364 to 405 (DLVKTRMQNQRAGSYIGEVAYRNSWDCFKKVVRHEGFMGLYR) are Mitochondrial matrix-facing. Residues 406-425 (GLLPQLMGVAPEKAIKLTVN) form a helical membrane-spanning segment. Residues 426-448 (DLVRDKLTDKKGNIPTWAEVLAG) lie on the Mitochondrial intermembrane side of the membrane. Residues 449 to 462 (GCAGASQVVFTNPL) traverse the membrane as a helical segment. Topologically, residues 463 to 497 (EIVKIRLQVAGEIASGSKIRAWSVVRELGLFGLYK) are mitochondrial matrix. A helical membrane pass occupies residues 498–517 (GARACLLRDVPFSAIYFPTY). The Mitochondrial intermembrane segment spans residues 518–536 (AHTKAMMADKDGYNHPLTL). The helical transmembrane segment at 537–554 (LAAGAIAGVPAASLVTPA) threads the bilayer. The Mitochondrial matrix portion of the chain corresponds to 555 to 593 (DVIKTRLQVVARSGQTTYTGVWDATKKIMAEEGPRAFWK). The helical transmembrane segment at 594–613 (GTAARVFRSSPQFGVTLVTY) threads the bilayer. At 614-695 (ELLQRLFYVD…AASPSTATGS (82 aa)) the chain is on the mitochondrial intermembrane side. A C-terminal domain region spans residues 628-695 (QPKGSEAHKI…AASPSTATGS (68 aa)).

The protein belongs to the mitochondrial carrier (TC 2.A.29) family. Homodimer (via N-terminus). Requires Ca(2+) as cofactor. Expressed throughout the body in both males and females, including in ovaries and testes. As to expression, specifically expressed in female ovaries. In terms of tissue distribution, expressed throughout the body in both males and females but absent from ovaries and testes.

It is found in the mitochondrion inner membrane. The enzyme catalyses L-aspartate(in) + L-glutamate(out) + H(+)(out) = L-aspartate(out) + L-glutamate(in) + H(+)(in). The catalysed reaction is 3-sulfino-L-alanine(out) + L-glutamate(in) + H(+)(in) = 3-sulfino-L-alanine(in) + L-glutamate(out) + H(+)(out). It catalyses the reaction L-2-aminoadipate(in) + L-glutamate(out) + H(+)(out) = L-2-aminoadipate(out) + L-glutamate(in) + H(+)(in). It carries out the reaction L-glutamine(in) + L-glutamate(out) + Na(+)(out) + H(+)(out) = L-glutamine(out) + L-glutamate(in) + Na(+)(in) + H(+)(in). Its activity is regulated as follows. Activated by Ca(2+). Inhibited by p-chloromercuribenzoate, pyrocarbonate, mersalyl, tannic acid and N-ethylmaleimide. Its function is as follows. Mitochondrial electrogenic aspartate/glutamate antiporter that favors efflux of aspartate and entry of glutamate and proton within the mitochondria as part of the malate-aspartate shuttle. Also mediates the exchange of L-cysteinesulfinate (3-sulfino-L-alanine) for L-glutamate. Necessary for gamma-aminobutyric acid (GABA) uptake in brain mitochondria in response to increased mitochondrial membrane polarization; does not possess detectable GABA transport activity but role may be indirect. Functionally, possesses transport activity towards L-aspartate, L-glutamate and L-cysteinesulfinate (3-sulfino-L-alanine). L-glutamine transport activity is undetectable. GABA transport activity is undetectable. Possesses transport activity towards L-aspartate, L-glutamate and L-cysteinesulfinate (3-sulfino-L-alanine). Has a wider substrate specificity range that includes L-2-aminoadipate and L-glutamine. GABA transport activity is undetectable. This chain is Electrogenic aspartate/glutamate antiporter Aralar, mitochondrial, found in Drosophila melanogaster (Fruit fly).